Consider the following 953-residue polypeptide: Translation initiation factor IF-2 (953 aa).

Disordered stretches follow at residues 48-240 (SSFS…AQQE) and 279-363 (TKLK…TERK). Basic and acidic residues-rich tracts occupy residues 80–89 (TGSEHVEKTQ), 98–111 (FKAE…EQAA), and 140–188 (QGDK…ENHK). Residues 191-207 (RFTNQKKQGRQEPQSKS) show a composition bias toward polar residues. Residues 229-240 (RQSETRFRAQQE) show a composition bias toward basic and acidic residues. Residues 282–291 (KSSNISAKST) show a composition bias toward polar residues. Basic and acidic residues predominate over residues 300 to 317 (ARPEKNRELTHHSQEGQK). A compositionally biased stretch (low complexity) spans 322 to 338 (SWNSQNQVRNQKNSNWN). Over residues 339 to 348 (KNKKTKKGKN) the composition is skewed to basic residues. The tr-type G domain occupies 454 to 623 (ERAPVVTIMG…LLVAEVEELK (170 aa)). Positions 463-470 (GHVDHGKT) are G1. 463-470 (GHVDHGKT) is a binding site for GTP. Residues 488–492 (GITQH) form a G2 region. Residues 509 to 512 (DTPG) are G3. GTP is bound by residues 509–513 (DTPGH) and 563–566 (NKID). Residues 563–566 (NKID) are G4. Positions 599–601 (SAK) are G5.

Belongs to the TRAFAC class translation factor GTPase superfamily. Classic translation factor GTPase family. IF-2 subfamily.

Its subcellular location is the cytoplasm. In terms of biological role, one of the essential components for the initiation of protein synthesis. Protects formylmethionyl-tRNA from spontaneous hydrolysis and promotes its binding to the 30S ribosomal subunits. Also involved in the hydrolysis of GTP during the formation of the 70S ribosomal complex. The protein is Translation initiation factor IF-2 of Streptococcus pyogenes serotype M1.